The sequence spans 297 residues: Ribosomal RNA small subunit methyltransferase A (297 aa).

N28, L30, G55, E76, D101, and N126 together coordinate S-adenosyl-L-methionine.

It belongs to the class I-like SAM-binding methyltransferase superfamily. rRNA adenine N(6)-methyltransferase family. RsmA subfamily.

It is found in the cytoplasm. The catalysed reaction is adenosine(1518)/adenosine(1519) in 16S rRNA + 4 S-adenosyl-L-methionine = N(6)-dimethyladenosine(1518)/N(6)-dimethyladenosine(1519) in 16S rRNA + 4 S-adenosyl-L-homocysteine + 4 H(+). In terms of biological role, specifically dimethylates two adjacent adenosines (A1518 and A1519) in the loop of a conserved hairpin near the 3'-end of 16S rRNA in the 30S particle. May play a critical role in biogenesis of 30S subunits. The sequence is that of Ribosomal RNA small subunit methyltransferase A from Latilactobacillus sakei subsp. sakei (strain 23K) (Lactobacillus sakei subsp. sakei).